A 241-amino-acid polypeptide reads, in one-letter code: MLAPTAAVNVTNEGENDNVMIDTTRGEIEFSDSAVNGTMDIEGAPKFAPAKTSAEKKRGAKPQMRRVPIPPHRMTPLRNVWPKLYPPLVEHLLLQVRMNTKSRSVELRESKATKDPGALQKGMDFVQAFALGFDIDDAIALLRLDDLYIDTFEIKDVKTLQGDHLSRAIGRIAGQGGKTKFAIENASRTRIVLADSKIHILGGFTNIRIAKDAVVSLILGSPPGKVYANLRNAAARAKERI.

The disordered stretch occupies residues 48 to 71; that stretch reads APAKTSAEKKRGAKPQMRRVPIPP. At Thr52 the chain carries Phosphothreonine. The KH domain occupies 162-214; the sequence is GDHLSRAIGRIAGQGGKTKFAIENASRTRIVLADSKIHILGGFTNIRIAKDAV.

This sequence belongs to the PNO1 family. Component of the small ribosomal subunit, ribosomal RNA processing complex (SSU RRP complex).

The protein localises to the cytoplasm. It localises to the nucleus. Its subcellular location is the nucleolus. Functionally, required for small ribosomal subunit (SSU) synthesis. Has a role in the processing of early nucleolar and late cytoplasmic pre-RNA species. In Schizosaccharomyces pombe (strain 972 / ATCC 24843) (Fission yeast), this protein is Pre-rRNA-processing protein pno1 (rbp28).